Consider the following 246-residue polypeptide: UDP-N-acetyl-D-mannosaminuronic acid transferase (246 aa).

This sequence belongs to the glycosyltransferase 26 family.

It carries out the reaction UDP-N-acetyl-alpha-D-mannosaminouronate + N-acetyl-alpha-D-glucosaminyl-di-trans,octa-cis-undecaprenyl diphosphate = beta-D-ManNAcA-(1-&gt;4)-alpha-D-GlcNAc-di-trans,octa-cis-undecaprenyl diphosphate + UDP + H(+). The protein operates within bacterial outer membrane biogenesis; enterobacterial common antigen biosynthesis. Functionally, catalyzes the synthesis of Und-PP-GlcNAc-ManNAcA (Lipid II), the second lipid-linked intermediate involved in enterobacterial common antigen (ECA) synthesis. The polypeptide is UDP-N-acetyl-D-mannosaminuronic acid transferase (Escherichia coli (strain ATCC 8739 / DSM 1576 / NBRC 3972 / NCIMB 8545 / WDCM 00012 / Crooks)).